The primary structure comprises 480 residues: Probable GH family 25 lysozyme 3 (480 aa).

Positions 1–20 (MNKLILSILSVLLIVSIASA) are cleaved as a signal peptide. The Ch-type lysozyme domain maps to 21–231 (GNGIDISSGT…STTSSSATSS (211 aa)). Catalysis depends on residues Asp25, Asp114, and Glu116. Positions 219-472 (SGSSTTSSSA…SSGSGNYTSG (254 aa)) are enriched in low complexity. A disordered region spans residues 219 to 480 (SGSSTTSSSA…SGSGNGAFLF (262 aa)). Asn423, Asn428, Asn437, Asn446, and Asn468 each carry an N-linked (GlcNAc...) asparagine glycan.

This sequence belongs to the glycosyl hydrolase 25 family.

The protein localises to the secreted. It carries out the reaction Hydrolysis of (1-&gt;4)-beta-linkages between N-acetylmuramic acid and N-acetyl-D-glucosamine residues in a peptidoglycan and between N-acetyl-D-glucosamine residues in chitodextrins.. The polypeptide is Probable GH family 25 lysozyme 3 (Dictyostelium discoideum (Social amoeba)).